We begin with the raw amino-acid sequence, 107 residues long: Integration host factor subunit beta (107 aa).

The segment at 56 to 107 is disordered; that stretch reads RPARVGRNPKSGEKVQVPEKFVPHFKPGKELRERVDGRAGEPLKADDPDDER. Over residues 82 to 101 the composition is skewed to basic and acidic residues; that stretch reads PGKELRERVDGRAGEPLKAD.

The protein belongs to the bacterial histone-like protein family. As to quaternary structure, heterodimer of an alpha and a beta chain.

Its function is as follows. This protein is one of the two subunits of integration host factor, a specific DNA-binding protein that functions in genetic recombination as well as in transcriptional and translational control. The chain is Integration host factor subunit beta from Burkholderia vietnamiensis (strain G4 / LMG 22486) (Burkholderia cepacia (strain R1808)).